A 673-amino-acid polypeptide reads, in one-letter code: UvrABC system protein B (673 aa).

The region spanning 26-183 (EGLEDGLAHQ…RRLAELQYTR (158 aa)) is the Helicase ATP-binding domain. 39 to 46 (GVTGSGKT) provides a ligand contact to ATP. A Beta-hairpin motif is present at residues 92–115 (YYDYYQPEAYVPSSDTFIEKDASV). The Helicase C-terminal domain occupies 431–597 (QVDDLLSEIR…GLNKKVVDIL (167 aa)). Residues 633 to 668 (QQKIHELEGQMMQHAQNLEFEEAAEIRDQLHQLREL) form the UVR domain.

The protein belongs to the UvrB family. Forms a heterotetramer with UvrA during the search for lesions. Interacts with UvrC in an incision complex.

It localises to the cytoplasm. Functionally, the UvrABC repair system catalyzes the recognition and processing of DNA lesions. A damage recognition complex composed of 2 UvrA and 2 UvrB subunits scans DNA for abnormalities. Upon binding of the UvrA(2)B(2) complex to a putative damaged site, the DNA wraps around one UvrB monomer. DNA wrap is dependent on ATP binding by UvrB and probably causes local melting of the DNA helix, facilitating insertion of UvrB beta-hairpin between the DNA strands. Then UvrB probes one DNA strand for the presence of a lesion. If a lesion is found the UvrA subunits dissociate and the UvrB-DNA preincision complex is formed. This complex is subsequently bound by UvrC and the second UvrB is released. If no lesion is found, the DNA wraps around the other UvrB subunit that will check the other stand for damage. The protein is UvrABC system protein B of Citrobacter koseri (strain ATCC BAA-895 / CDC 4225-83 / SGSC4696).